Consider the following 67-residue polypeptide: Large ribosomal subunit protein bL32 (67 aa).

A compositionally biased stretch (basic residues) spans 1 to 19; the sequence is MAVPKRKMSRSNTRARRSQ. Residues 1–21 form a disordered region; it reads MAVPKRKMSRSNTRARRSQWK.

Belongs to the bacterial ribosomal protein bL32 family.

In Clavibacter michiganensis subsp. michiganensis (strain NCPPB 382), this protein is Large ribosomal subunit protein bL32.